The primary structure comprises 362 residues: Chorismate synthase (362 aa).

Residues Arg-48 and Arg-54 each contribute to the NADP(+) site. Residues 131 to 133 (RSS), 243 to 244 (NA), Gly-287, 302 to 306 (KPTSS), and Arg-328 each bind FMN.

Belongs to the chorismate synthase family. As to quaternary structure, homotetramer. FMNH2 is required as a cofactor.

The enzyme catalyses 5-O-(1-carboxyvinyl)-3-phosphoshikimate = chorismate + phosphate. It functions in the pathway metabolic intermediate biosynthesis; chorismate biosynthesis; chorismate from D-erythrose 4-phosphate and phosphoenolpyruvate: step 7/7. Catalyzes the anti-1,4-elimination of the C-3 phosphate and the C-6 proR hydrogen from 5-enolpyruvylshikimate-3-phosphate (EPSP) to yield chorismate, which is the branch point compound that serves as the starting substrate for the three terminal pathways of aromatic amino acid biosynthesis. This reaction introduces a second double bond into the aromatic ring system. This Rhodopseudomonas palustris (strain BisB18) protein is Chorismate synthase.